Consider the following 81-residue polypeptide: Conotoxin Eb11.3 (81 aa).

An N-terminal signal peptide occupies residues 1 to 23 (MMFRLTSVWCLLVIVLLNSAVDG). Intrachain disulfides connect Cys-27-Cys-41, Cys-34-Cys-48, Cys-40-Cys-56, and Cys-47-Cys-62. Leu-69 is modified (leucine amide). A propeptide spanning residues 73–81 (AQYKRFFRR) is cleaved from the precursor.

Belongs to the conotoxin I2 superfamily. In terms of tissue distribution, expressed by the venom duct.

Its subcellular location is the secreted. This Conus eburneus (Ivory cone) protein is Conotoxin Eb11.3.